Consider the following 638-residue polypeptide: 1-deoxy-D-xylulose-5-phosphate synthase (638 aa).

Residues histidine 79 and 120-122 (AHS) contribute to the thiamine diphosphate site. Position 151 (aspartate 151) interacts with Mg(2+). Thiamine diphosphate-binding positions include 152-153 (GA), asparagine 180, tyrosine 289, and glutamate 371. Asparagine 180 is a binding site for Mg(2+).

The protein belongs to the transketolase family. DXPS subfamily. Homodimer. Mg(2+) serves as cofactor. It depends on thiamine diphosphate as a cofactor.

The enzyme catalyses D-glyceraldehyde 3-phosphate + pyruvate + H(+) = 1-deoxy-D-xylulose 5-phosphate + CO2. The protein operates within metabolic intermediate biosynthesis; 1-deoxy-D-xylulose 5-phosphate biosynthesis; 1-deoxy-D-xylulose 5-phosphate from D-glyceraldehyde 3-phosphate and pyruvate: step 1/1. Functionally, catalyzes the acyloin condensation reaction between C atoms 2 and 3 of pyruvate and glyceraldehyde 3-phosphate to yield 1-deoxy-D-xylulose-5-phosphate (DXP). This Rhizobium rhizogenes (strain K84 / ATCC BAA-868) (Agrobacterium radiobacter) protein is 1-deoxy-D-xylulose-5-phosphate synthase.